We begin with the raw amino-acid sequence, 395 residues long: L-rhamnonate dehydratase (395 aa).

The substrate site is built by H23 and R49. Mg(2+) is bound by residues D215, E241, and E269. The active-site Proton acceptor is the H319. E339 contributes to the substrate binding site.

It belongs to the mandelate racemase/muconate lactonizing enzyme family. RhamD subfamily. In terms of assembly, homooctamer; tetramer of dimers. Mg(2+) is required as a cofactor.

It catalyses the reaction L-rhamnonate = 2-dehydro-3-deoxy-L-rhamnonate + H2O. Its function is as follows. Catalyzes the dehydration of L-rhamnonate to 2-keto-3-deoxy-L-rhamnonate (KDR). In Delftia acidovorans (strain DSM 14801 / SPH-1), this protein is L-rhamnonate dehydratase.